Here is a 209-residue protein sequence, read N- to C-terminus: ATP synthase subunit b', chloroplastic (209 aa).

Residues 1–62 (MASLLARPQQ…NALMAMPAAA (62 aa)) constitute a chloroplast transit peptide. A helical membrane pass occupies residues 67–87 (IFDFNLTLPVMAGEFLLLMVF).

Belongs to the ATPase B chain family. F-type ATPases have 2 components, F(1) - the catalytic core - and F(0) - the membrane proton channel. F(1) has five subunits: alpha(3), beta(3), gamma(1), delta(1), epsilon(1). F(0) has four main subunits: a(1), b(1), b'(1) and c(10-14). The alpha and beta chains form an alternating ring which encloses part of the gamma chain. F(1) is attached to F(0) by a central stalk formed by the gamma and epsilon chains, while a peripheral stalk is formed by the delta, b and b' chains.

The protein resides in the plastid. It is found in the chloroplast thylakoid membrane. Its function is as follows. F(1)F(0) ATP synthase produces ATP from ADP in the presence of a proton or sodium gradient. F-type ATPases consist of two structural domains, F(1) containing the extramembraneous catalytic core and F(0) containing the membrane proton channel, linked together by a central stalk and a peripheral stalk. During catalysis, ATP synthesis in the catalytic domain of F(1) is coupled via a rotary mechanism of the central stalk subunits to proton translocation. Component of the F(0) channel, it forms part of the peripheral stalk, linking F(1) to F(0). The b'-subunit is a diverged and duplicated form of b found in plants and photosynthetic bacteria. In Chlamydomonas reinhardtii (Chlamydomonas smithii), this protein is ATP synthase subunit b', chloroplastic.